A 323-amino-acid polypeptide reads, in one-letter code: MESFPIINLEKLNGEERAITMEKIKDACENWGFFECVNHGISLELLDKVEKMTKEHYKKCMEERFKESIKNRGLDSLRSEVNDVDWESTFYLKHLPVSNISDVPDLDDDYRTLMKDFAGKIEKLSEELLDLLCENLGLEKGYLKKVFYGSKRPTFGTKVSNYPPCPNPDLVKGLRAHTDAGGIILLFQDDKVSGLQLLKDGEWVDVPPVKHSIVVNLGDQLEVITNGKYKSVEHRVLSQTDGEGRMSIASFYNPGSDSVIFPAPELIGKEAEKEKKENYPRFVFEDYMKLYSAVKFQAKEPRFEAMKAMETTVANNVGPLATA.

Methionine 1 carries the N-acetylmethionine modification. Positions 153–254 constitute a Fe2OG dioxygenase domain; sequence PTFGTKVSNY…RMSIASFYNP (102 aa). Fe cation-binding residues include histidine 177, aspartate 179, and histidine 234. Residue arginine 245 coordinates 2-oxoglutarate.

Belongs to the iron/ascorbate-dependent oxidoreductase family. Requires Fe cation as cofactor. Expressed in vegetative tissues. Expressed constitutively at a low level in leaves and blades.

The catalysed reaction is 1-aminocyclopropane-1-carboxylate + L-ascorbate + O2 = ethene + L-dehydroascorbate + hydrogen cyanide + CO2 + 2 H2O. It functions in the pathway alkene biosynthesis; ethylene biosynthesis via S-adenosyl-L-methionine; ethylene from S-adenosyl-L-methionine: step 2/2. Enzyme involved in the ethylene biosynthesis. May promote stem elongation by maximizing the extensibility cells, possibly by activating ethylene biosynthesis, in response to very-long-chain fatty acids (VLCFAs C20:0 to C30:0). This Arabidopsis thaliana (Mouse-ear cress) protein is 1-aminocyclopropane-1-carboxylate oxidase 4 (ACO4).